Reading from the N-terminus, the 134-residue chain is Small ribosomal subunit protein uS8 (134 aa).

It belongs to the universal ribosomal protein uS8 family. In terms of assembly, part of the 30S ribosomal subunit. Contacts proteins S5 and S12.

Functionally, one of the primary rRNA binding proteins, it binds directly to 16S rRNA central domain where it helps coordinate assembly of the platform of the 30S subunit. The polypeptide is Small ribosomal subunit protein uS8 (Fervidobacterium nodosum (strain ATCC 35602 / DSM 5306 / Rt17-B1)).